The sequence spans 155 residues: Small ribosomal subunit protein uS7c (155 aa).

Belongs to the universal ribosomal protein uS7 family. Part of the 30S ribosomal subunit.

It is found in the plastid. It localises to the chloroplast. One of the primary rRNA binding proteins, it binds directly to 16S rRNA where it nucleates assembly of the head domain of the 30S subunit. The polypeptide is Small ribosomal subunit protein uS7c (rps7) (Houttuynia cordata (Chameleon plant)).